The sequence spans 478 residues: Cysteine protease ATG4B (478 aa).

Positions Met1 to Asp15 are enriched in polar residues. The segment at Met1 to Gln31 is disordered. Residue Cys164 is the Nucleophile of the active site. Active-site residues include Asp361 and His363.

It belongs to the peptidase C54 family. Interacts with ATG8.

Its subcellular location is the cytoplasm. The enzyme catalyses [protein]-C-terminal L-amino acid-glycyl-phosphatidylethanolamide + H2O = [protein]-C-terminal L-amino acid-glycine + a 1,2-diacyl-sn-glycero-3-phosphoethanolamine. Its function is as follows. Cysteine protease that plays a key role in autophagy by mediating both proteolytic activation and delipidation of ATG8 family proteins. The protease activity is required for proteolytic activation of ATG8 family proteins: cleaves the C-terminal amino acid of ATG8 proteins to reveal a C-terminal glycine. Exposure of the glycine at the C-terminus is essential for ATG8 proteins conjugation to phosphatidylethanolamine (PE) and insertion to membranes, which is necessary for autophagy. In addition to the protease activity, also mediates delipidation of PE-conjugated ATG8 proteins. The polypeptide is Cysteine protease ATG4B (ATG4B) (Oryza sativa subsp. japonica (Rice)).